The sequence spans 71 residues: Conotoxin Bu24 (71 aa).

Residues 1-21 form the signal peptide; sequence MGMRMMVTVFLLVVLATTVVS. Residues 22 to 44 constitute a propeptide that is removed on maturation; the sequence is LRSNRASDGRRGIVNKLNDLVPK. Residue asparagine 70 is modified to Asparagine amide.

Belongs to the conotoxin A superfamily. Contains 3 disulfide bonds. They are not indicated here, since framework IV presents two different connectivities (I-V, II-III, IV-VI and I-III, II-V, IV-VI). Expressed by the venom duct.

Its subcellular location is the secreted. The polypeptide is Conotoxin Bu24 (Conus bullatus (Bubble cone)).